The following is a 128-amino-acid chain: Large ribosomal subunit protein bL17 (128 aa).

It belongs to the bacterial ribosomal protein bL17 family. As to quaternary structure, part of the 50S ribosomal subunit. Contacts protein L32.

In Streptococcus mutans serotype c (strain ATCC 700610 / UA159), this protein is Large ribosomal subunit protein bL17.